The sequence spans 378 residues: Phosphoserine aminotransferase (378 aa).

Arginine 53 lines the L-glutamate pocket. Positions 117, 167, 190, and 213 each coordinate pyridoxal 5'-phosphate. Position 214 is an N6-(pyridoxal phosphate)lysine (lysine 214). A pyridoxal 5'-phosphate-binding site is contributed by 255-256 (NT).

This sequence belongs to the class-V pyridoxal-phosphate-dependent aminotransferase family. SerC subfamily. Homodimer. Pyridoxal 5'-phosphate serves as cofactor.

The protein localises to the cytoplasm. It catalyses the reaction O-phospho-L-serine + 2-oxoglutarate = 3-phosphooxypyruvate + L-glutamate. The enzyme catalyses 4-(phosphooxy)-L-threonine + 2-oxoglutarate = (R)-3-hydroxy-2-oxo-4-phosphooxybutanoate + L-glutamate. It participates in amino-acid biosynthesis; L-serine biosynthesis; L-serine from 3-phospho-D-glycerate: step 2/3. The protein operates within cofactor biosynthesis; pyridoxine 5'-phosphate biosynthesis; pyridoxine 5'-phosphate from D-erythrose 4-phosphate: step 3/5. Functionally, catalyzes the reversible conversion of 3-phosphohydroxypyruvate to phosphoserine and of 3-hydroxy-2-oxo-4-phosphonooxybutanoate to phosphohydroxythreonine. The sequence is that of Phosphoserine aminotransferase from Ralstonia pickettii (strain 12J).